The chain runs to 104 residues: Large ribosomal subunit protein bL21 (104 aa).

It belongs to the bacterial ribosomal protein bL21 family. Part of the 50S ribosomal subunit. Contacts protein L20.

Its function is as follows. This protein binds to 23S rRNA in the presence of protein L20. This Helicobacter pylori (strain P12) protein is Large ribosomal subunit protein bL21.